Here is a 329-residue protein sequence, read N- to C-terminus: Carrier protein YMC2, mitochondrial (329 aa).

Residues 1–27 (MSEEFPTPQLLDELEDQQKVTTPNEKR) form a disordered region. Residues 1 to 33 (MSEEFPTPQLLDELEDQQKVTTPNEKRELSSNR) constitute a mitochondrion transit peptide. 3 Solcar repeats span residues 34–115 (VLKD…MKRF), 143–226 (SQYY…LVAR), and 238–325 (PPWK…VMRF). 6 consecutive transmembrane segments (helical) span residues 38 to 58 (IFAGTIGGIAQVLVGQPFDTT), 84 to 104 (VFAFYKGALTPLLGVGICVSV), 140 to 160 (LPLSQYYVCGLTGGVVNSFLA), 205 to 225 (TMIRAGHGLGTYFLVYEALVA), 243 to 263 (CLFGAFSGTMLWLTVYPLDVV), and 297 to 318 (FFKGFGPTMVRSAPVNGATFLT).

This sequence belongs to the mitochondrial carrier (TC 2.A.29) family.

It localises to the mitochondrion inner membrane. The polypeptide is Carrier protein YMC2, mitochondrial (YMC2) (Saccharomyces cerevisiae (strain ATCC 204508 / S288c) (Baker's yeast)).